The following is a 193-amino-acid chain: Putative manganese efflux pump MntP (193 aa).

Helical transmembrane passes span leucine 8–leucine 28, leucine 37–phenylalanine 57, phenylalanine 61–glycine 81, methionine 109–isoleucine 129, proline 138–isoleucine 158, and leucine 172–leucine 192.

The protein belongs to the MntP (TC 9.B.29) family.

It is found in the cell inner membrane. Functionally, probably functions as a manganese efflux pump. The polypeptide is Putative manganese efflux pump MntP (Bacteroides thetaiotaomicron (strain ATCC 29148 / DSM 2079 / JCM 5827 / CCUG 10774 / NCTC 10582 / VPI-5482 / E50)).